We begin with the raw amino-acid sequence, 511 residues long: GMP synthase [glutamine-hydrolyzing] (511 aa).

The Glutamine amidotransferase type-1 domain occupies 5–195; sequence LILVLDFGGQ…LYKICGCSGD (191 aa). The active-site Nucleophile is Cys82. Residues His169 and Glu171 contribute to the active site. Residues 196–386 form the GMPS ATP-PPase domain; sequence WKMASFIEHS…LGIPEDIVMR (191 aa). 223-229 is an ATP binding site; it reads SGGVDSS.

Homodimer.

It carries out the reaction XMP + L-glutamine + ATP + H2O = GMP + L-glutamate + AMP + diphosphate + 2 H(+). The protein operates within purine metabolism; GMP biosynthesis; GMP from XMP (L-Gln route): step 1/1. Its function is as follows. Catalyzes the synthesis of GMP from XMP. This Acetivibrio thermocellus (strain ATCC 27405 / DSM 1237 / JCM 9322 / NBRC 103400 / NCIMB 10682 / NRRL B-4536 / VPI 7372) (Clostridium thermocellum) protein is GMP synthase [glutamine-hydrolyzing].